A 157-amino-acid polypeptide reads, in one-letter code: Endoribonuclease YbeY (157 aa).

3 residues coordinate Zn(2+): H114, H118, and H124.

Belongs to the endoribonuclease YbeY family. It depends on Zn(2+) as a cofactor.

It is found in the cytoplasm. Its function is as follows. Single strand-specific metallo-endoribonuclease involved in late-stage 70S ribosome quality control and in maturation of the 3' terminus of the 16S rRNA. The sequence is that of Endoribonuclease YbeY from Serratia proteamaculans (strain 568).